The primary structure comprises 236 residues: Demethylmenaquinone methyltransferase (236 aa).

S-adenosyl-L-methionine-binding positions include threonine 58, aspartate 79, and 106 to 107 (NA).

The protein belongs to the class I-like SAM-binding methyltransferase superfamily. MenG/UbiE family.

It carries out the reaction a 2-demethylmenaquinol + S-adenosyl-L-methionine = a menaquinol + S-adenosyl-L-homocysteine + H(+). Its pathway is quinol/quinone metabolism; menaquinone biosynthesis; menaquinol from 1,4-dihydroxy-2-naphthoate: step 2/2. In terms of biological role, methyltransferase required for the conversion of demethylmenaquinol (DMKH2) to menaquinol (MKH2). This Listeria welshimeri serovar 6b (strain ATCC 35897 / DSM 20650 / CCUG 15529 / CIP 8149 / NCTC 11857 / SLCC 5334 / V8) protein is Demethylmenaquinone methyltransferase.